Consider the following 203-residue polypeptide: Excretory canal abnormal exc-13 (203 aa).

A signal peptide spans 1 to 20 (MIGFLKFALIGTVLLGVANG). 3 N-linked (GlcNAc...) asparagine glycosylation sites follow: asparagine 32, asparagine 84, and asparagine 188.

This sequence belongs to the UPF0376 family.

It localises to the secreted. The protein is Excretory canal abnormal exc-13 of Caenorhabditis elegans.